Here is a 273-residue protein sequence, read N- to C-terminus: SPRY domain-containing SOCS box protein 4 (273 aa).

The B30.2/SPRY domain occupies 34–233 (PARLDQLLDM…MRYINGLDPE (200 aa)). An SOCS box domain is found at 234-273 (PLPLMDLCRRSIRSALGRQRLRDIGSLPLPQSLKNYLQYQ).

This sequence belongs to the SPSB family. In terms of assembly, component of the probable ECS(SPSB4) E3 ubiquitin-protein ligase complex which contains CUL5, RNF7/RBX2, Elongin BC complex and SPSB4. Interacts with CUL5; RNF7; ELOB and ELOC. Interacts with MET. Interacts (via B30.2/SPRY domain) with PAWR; this interaction occurs in association with the Elongin BC complex. Interacts with NOS2. Interacts with EPHB2.

It is found in the cytoplasm. The protein resides in the cytosol. The protein operates within protein modification; protein ubiquitination. In terms of biological role, substrate recognition component of a SCF-like ECS (Elongin BC-CUL2/5-SOCS-box protein) E3 ubiquitin-protein ligase complex which mediates the ubiquitination and subsequent proteasomal degradation of target proteins. Negatively regulates nitric oxide (NO) production and limits cellular toxicity in activated macrophages by mediating the ubiquitination and proteasomal degradation of NOS2. Acts as a bridge which links NOS2 with the ECS E3 ubiquitin ligase complex components ELOC and CUL5. Diminishes EphB2-dependent cell repulsive responses by mediating the ubiquitination and degradation of the EphB2/CTF2. Regulates cellular clock function by mediating ubiquitination and proteasomal degradation of the circadian transcriptional repressor NR1D1. The protein is SPRY domain-containing SOCS box protein 4 (Spsb4) of Mus musculus (Mouse).